We begin with the raw amino-acid sequence, 770 residues long: MAGSLDDSIYNNGRSGGGGGGFKFSKGFNKDSISKRIIMMLFFSKGIRAWSCIILLYFLQSSISIISASFYMCLFSAIFSVVVEKPWNLLSSLRPSQIKKIIYHSIFNLLIIITWNSSIKFIGPIGSILASDYTFSTYPLIFNSLLQGNFLATDMSRGSIMLMIGYFLIPLFGISNRLDILGYTSSQVFMIGLFSLIVHNVLVLWKKTIVRSWNSGSSGGKNKLSSLGSCVSTIILFVFKLFEGFSSGSSGSDSINQVSYSQLFVIAIITFILYSLNQFIDDVSEKELTFNVLSKVSLTSSVIFGLLAALFIGFKDFFHPILILSFIFIINAIHILYSKSNDIQPMTFSNNMDGGNSSIKTYNSSGGGGGGSIINGNGSGNAIYYFEILKDVLRQIVDKPTSRRIFTFLVINLMFMFVEMAYGIWTNSLGLITDACHMFFDATALFIALVAEVISQWKQNDKYSYGYGRFQVLSGFVNGIFLIFIAVTILMESVERLLEPPEINTDKLLLVSVLGFIINLIGIFSFHGDHGHSHGGGGGHSHGGGEKKEKHHGHSHGGHGDHQQVTPILGEEKKKKRSVNIDGVFLHLLADTLGSVGVIVSSLIIQIWGYTLADPICSLLISILIFLSVLPLIANTAKTLLQCTPEPIQSSLYQINQFILSIDGVHNIISYHFWSHYDDMNIATLKIQLNETASSNSTLDTERIKKSISKYLNKDHNIHKCIIEFIPLLYNNNNQQQGNDVPLINHHIHNDIHHNHSSSSSSSSHHHRHN.

Residues 1-36 (MAGSLDDSIYNNGRSGGGGGGFKFSKGFNKDSISKR) lie on the Cytoplasmic side of the membrane. Residues 37-57 (IIMMLFFSKGIRAWSCIILLY) form a helical membrane-spanning segment. The Extracellular segment spans residues 58–62 (FLQSS). The helical transmembrane segment at 63-83 (ISIISASFYMCLFSAIFSVVV) threads the bilayer. Over 84 to 100 (EKPWNLLSSLRPSQIKK) the chain is Cytoplasmic. A helical membrane pass occupies residues 101-117 (IIYHSIFNLLIIITWNS). The Extracellular segment spans residues 118–123 (SIKFIG). The helical transmembrane segment at 124–146 (PIGSILASDYTFSTYPLIFNSLL) threads the bilayer. At 147–154 (QGNFLATD) the chain is on the cytoplasmic side. The chain crosses the membrane as a helical span at residues 155–175 (MSRGSIMLMIGYFLIPLFGIS). At 176–184 (NRLDILGYT) the chain is on the extracellular side. A helical membrane pass occupies residues 185-205 (SSQVFMIGLFSLIVHNVLVLW). Topologically, residues 206 to 224 (KKTIVRSWNSGSSGGKNKL) are cytoplasmic. A helical membrane pass occupies residues 225-245 (SSLGSCVSTIILFVFKLFEGF). Residues 246–262 (SSGSSGSDSINQVSYSQ) are Extracellular-facing. Residues 263-283 (LFVIAIITFILYSLNQFIDDV) form a helical membrane-spanning segment. At 284–291 (SEKELTFN) the chain is on the cytoplasmic side. Residues 292-312 (VLSKVSLTSSVIFGLLAALFI) traverse the membrane as a helical segment. Residues 313-316 (GFKD) lie on the Extracellular side of the membrane. A helical membrane pass occupies residues 317–337 (FFHPILILSFIFIINAIHILY). Residues 338–404 (SKSNDIQPMT…QIVDKPTSRR (67 aa)) lie on the Cytoplasmic side of the membrane. A helical membrane pass occupies residues 405–425 (IFTFLVINLMFMFVEMAYGIW). The Extracellular portion of the chain corresponds to 426–434 (TNSLGLITD). A helical membrane pass occupies residues 435 to 455 (ACHMFFDATALFIALVAEVIS). The Cytoplasmic portion of the chain corresponds to 456 to 469 (QWKQNDKYSYGYGR). The chain crosses the membrane as a helical span at residues 470 to 490 (FQVLSGFVNGIFLIFIAVTIL). Over 491-507 (MESVERLLEPPEINTDK) the chain is Extracellular. A helical transmembrane segment spans residues 508–528 (LLLVSVLGFIINLIGIFSFHG). Over 529–592 (DHGHSHGGGG…GVFLHLLADT (64 aa)) the chain is Cytoplasmic. A disordered region spans residues 532-566 (HSHGGGGGHSHGGGEKKEKHHGHSHGGHGDHQQVT). A helical transmembrane segment spans residues 593-613 (LGSVGVIVSSLIIQIWGYTLA). Asp-614 is a topological domain (extracellular). Residues 615–635 (PICSLLISILIFLSVLPLIAN) traverse the membrane as a helical segment. Residues 636 to 770 (TAKTLLQCTP…SSSSHHHRHN (135 aa)) lie on the Cytoplasmic side of the membrane. The disordered stretch occupies residues 751–770 (DIHHNHSSSSSSSSHHHRHN).

Belongs to the cation diffusion facilitator (CDF) transporter (TC 2.A.4) family. SLC30A subfamily.

Its subcellular location is the membrane. May be involved in zinc transport from the cytoplasm to either intracellular organelles or extracellular spaces. The protein is Probable zinc transporter protein DDB_G0291141 of Dictyostelium discoideum (Social amoeba).